The chain runs to 203 residues: Probable GTP-binding protein EngB (203 aa).

In terms of domain architecture, EngB-type G spans 24-199 (DGSEVAFAGR…HTVIETWLGL (176 aa)). GTP-binding positions include 32–39 (GRSNAGKS), 59–63 (GRTQQ), 77–80 (DLPG), 144–147 (TKAD), and 178–180 (FSS). 2 residues coordinate Mg(2+): Ser-39 and Thr-61.

The protein belongs to the TRAFAC class TrmE-Era-EngA-EngB-Septin-like GTPase superfamily. EngB GTPase family. Mg(2+) is required as a cofactor.

In terms of biological role, necessary for normal cell division and for the maintenance of normal septation. This chain is Probable GTP-binding protein EngB, found in Xylella fastidiosa (strain Temecula1 / ATCC 700964).